Here is a 378-residue protein sequence, read N- to C-terminus: Cobalt-precorrin-5B C(1)-methyltransferase (378 aa).

The protein belongs to the CbiD family.

The catalysed reaction is Co-precorrin-5B + S-adenosyl-L-methionine = Co-precorrin-6A + S-adenosyl-L-homocysteine. The protein operates within cofactor biosynthesis; adenosylcobalamin biosynthesis; cob(II)yrinate a,c-diamide from sirohydrochlorin (anaerobic route): step 6/10. In terms of biological role, catalyzes the methylation of C-1 in cobalt-precorrin-5B to form cobalt-precorrin-6A. This is Cobalt-precorrin-5B C(1)-methyltransferase from Tolumonas auensis (strain DSM 9187 / NBRC 110442 / TA 4).